A 534-amino-acid chain; its full sequence is NAD(P)H-quinone oxidoreductase subunit 2 (534 aa).

The next 14 membrane-spanning stretches (helical) occupy residues I15–L35, W42–W62, L79–I99, L109–A129, L132–Y152, L167–L187, L210–A230, P244–I264, F280–Q300, M306–T326, I334–F354, L378–G398, G410–V432, and V466–F486.

This sequence belongs to the complex I subunit 2 family. NDH-1 can be composed of about 15 different subunits; different subcomplexes with different compositions have been identified which probably have different functions.

The protein localises to the cellular thylakoid membrane. It catalyses the reaction a plastoquinone + NADH + (n+1) H(+)(in) = a plastoquinol + NAD(+) + n H(+)(out). The catalysed reaction is a plastoquinone + NADPH + (n+1) H(+)(in) = a plastoquinol + NADP(+) + n H(+)(out). Functionally, NDH-1 shuttles electrons from an unknown electron donor, via FMN and iron-sulfur (Fe-S) centers, to quinones in the respiratory and/or the photosynthetic chain. The immediate electron acceptor for the enzyme in this species is believed to be plastoquinone. Couples the redox reaction to proton translocation, and thus conserves the redox energy in a proton gradient. Cyanobacterial NDH-1 also plays a role in inorganic carbon-concentration. The sequence is that of NAD(P)H-quinone oxidoreductase subunit 2 from Nostoc punctiforme (strain ATCC 29133 / PCC 73102).